The chain runs to 567 residues: Geraniol synthase, chloroplastic (567 aa).

The N-terminal 63 residues, 1 to 63 (MSCARITVTL…GDNSQRKNTR (63 aa)), are a transit peptide targeting the chloroplast. The tract at residues 48–75 (STPLINGDNSQRKNTRQHMEESSSKRRE) is disordered. A compositionally biased stretch (basic and acidic residues) spans 64–75 (QHMEESSSKRRE). The (2E)-geranyl diphosphate site is built by Arg286, Asp323, Asp327, Arg466, and Asp469. Mn(2+) contacts are provided by Asp323 and Asp327. The DDXXD motif motif lies at 323 to 327 (DDIFD). 3 residues coordinate Mn(2+): Asp469, Thr473, and Glu477.

It belongs to the terpene synthase family. Tpsb subfamily. In terms of assembly, homodimer. Mn(2+) is required as a cofactor. Expressed in the peltate glandular trichomes of the leaves.

The protein localises to the plastid. It is found in the chloroplast. It carries out the reaction (2E)-geranyl diphosphate + H2O = (2E)-geraniol + diphosphate. The protein operates within secondary metabolite biosynthesis; terpenoid biosynthesis. Its function is as follows. Monoterpene synthase that catalyzes the formation of geraniol from geranyl diphosphate. The sequence is that of Geraniol synthase, chloroplastic (GES) from Ocimum basilicum (Sweet basil).